The chain runs to 89 residues: U1-hexatoxin-Iw1e (89 aa).

The signal sequence occupies residues 1 to 18 (MLKFVVLIFVVIMASTFA). 5 cysteine pairs are disulfide-bonded: cysteine 21/cysteine 32, cysteine 26/cysteine 40, cysteine 31/cysteine 66, cysteine 50/cysteine 74, and cysteine 68/cysteine 81. Positions 87–89 (RSE) are excised as a propeptide.

This sequence belongs to the MIT-like AcTx family. Expressed by the venom gland.

It localises to the secreted. The chain is U1-hexatoxin-Iw1e from Illawarra wisharti (Illawarra funnel-web spider).